A 248-amino-acid polypeptide reads, in one-letter code: 14-3-3 protein zeta (248 aa).

Belongs to the 14-3-3 family. Homodimer; homodimerization is not essential for modulating the activity of Slo. Interacts with phosphorylated Slob; the interaction with Slob mediates an indirect interaction with Slo. Interacts with phosphorylated yki. Interacts with hemo; this represses 14-3-3zeta activity which prevents the 14-3-3zeta-mediated activation of phosphoinositide 3-kinase Pi3K68D. This, in turn, inhibits the Pi3K68D-mediated conversion of phosphatidylinositol to phosphatidylinositol-3-phosphate and prevents progression of early endosomes through the maturation process which regulates subsequent steps of phagocytic processing. Interacts with REPTOR (when phosphorylated), this interaction may assist the cytoplasmic retention of REPTOR. In terms of tissue distribution, predominantly expressed in the ventral nerve cord of the embryo, and in the neural tissues of the head. Also found in the region posterior to the morphogenetic furrow of the eye imaginal disk where cells differentiate as photoreceptors.

It localises to the cytoplasm. The protein localises to the early endosome. Its function is as follows. Required in Raf-dependent cell proliferation and photoreceptor differentiation during eye development. Acts upstream of Raf and downstream of Ras, and is essential for viability. Acts as a negative regulator of the slo calcium channel via its interaction with slo-binding protein slob. Inhibits yki activity by restricting its nuclear localization. Binds to and promotes the activity of phosphoinositide 3-kinase Pi3K68D which converts phosphatidylinositol to phosphatidylinositol-3-phosphate and promotes maturation of early endosomes. In Drosophila melanogaster (Fruit fly), this protein is 14-3-3 protein zeta (14-3-3zeta).